Here is a 224-residue protein sequence, read N- to C-terminus: Protein DEHYDRATION-INDUCED 19 homolog 4 (224 aa).

Polar residues predominate over residues 1–12; it reads MDSNWINCPSVF. The interval 1–23 is disordered; the sequence is MDSNWINCPSVFSSSSSSSRRCQ. The segment covering 13–23 has biased composition (low complexity); sequence SSSSSSSRRCQ. Phosphothreonine is present on Thr117.

The protein belongs to the Di19 family. In terms of processing, phosphorylated in vitro by CPK3 or CPK11. As to expression, expressed in seedlings, roots, leaves, stems, flowers and siliques.

It localises to the cytoplasm. It is found in the perinuclear region. The sequence is that of Protein DEHYDRATION-INDUCED 19 homolog 4 (DI19-4) from Arabidopsis thaliana (Mouse-ear cress).